A 106-amino-acid polypeptide reads, in one-letter code: ATP-dependent Clp protease adapter protein ClpS (106 aa).

This sequence belongs to the ClpS family. As to quaternary structure, binds to the N-terminal domain of the chaperone ClpA.

Involved in the modulation of the specificity of the ClpAP-mediated ATP-dependent protein degradation. This chain is ATP-dependent Clp protease adapter protein ClpS, found in Salmonella agona (strain SL483).